Here is a 446-residue protein sequence, read N- to C-terminus: Neuraminidase (446 aa).

A hypervariable stalk region region spans residues 13 to 65; the sequence is HFNQYECDSLADNQVMPCEPIIIERNITEIIYLTNTTIEKEICPKLMEYRNWS. N-linked (GlcNAc...) asparagine; by host glycans are attached at residues asparagine 38, asparagine 47, and asparagine 63. The segment at 68–446 is head of neuraminidase; sequence QCKITGFAPF…DGANINFMPI (379 aa). 8 cysteine pairs are disulfide-bonded: cysteine 69/cysteine 394, cysteine 101/cysteine 106, cysteine 160/cysteine 207, cysteine 209/cysteine 214, cysteine 255/cysteine 268, cysteine 257/cysteine 266, cysteine 295/cysteine 314, and cysteine 398/cysteine 424. Arginine 95 is a binding site for substrate. Asparagine 123 is a glycosylation site (N-linked (GlcNAc...) asparagine; by host). The active-site Proton donor/acceptor is the aspartate 128. Substrate is bound at residue arginine 129. N-linked (GlcNAc...) asparagine; by host glycosylation is found at asparagine 177 and asparagine 211. Position 253–254 (253–254) interacts with substrate; the sequence is EE. Position 269 (arginine 269) interacts with substrate. 3 residues coordinate Ca(2+): aspartate 270, glycine 274, and aspartate 301. The tract at residues 304–327 is disordered; it reads RNNDRSSSSDCKNPNNDKGNHGVK. Over residues 308–320 the composition is skewed to polar residues; it reads RSSSSDCKNPNND. Substrate is bound at residue arginine 348. A glycan (N-linked (GlcNAc...) asparagine; by host) is linked at asparagine 379. Tyrosine 383 acts as the Nucleophile in catalysis.

It belongs to the glycosyl hydrolase 34 family. In terms of assembly, homotetramer. Ca(2+) serves as cofactor. In terms of processing, N-glycosylated.

It is found in the virion membrane. The protein localises to the host apical cell membrane. The enzyme catalyses Hydrolysis of alpha-(2-&gt;3)-, alpha-(2-&gt;6)-, alpha-(2-&gt;8)- glycosidic linkages of terminal sialic acid residues in oligosaccharides, glycoproteins, glycolipids, colominic acid and synthetic substrates.. With respect to regulation, inhibited by the neuraminidase inhibitors zanamivir (Relenza) and oseltamivir (Tamiflu). These drugs interfere with the release of progeny virus from infected cells and are effective against all influenza strains. Resistance to neuraminidase inhibitors is quite rare. Functionally, catalyzes the removal of terminal sialic acid residues from viral and cellular glycoconjugates. Cleaves off the terminal sialic acids on the glycosylated HA during virus budding to facilitate virus release. Additionally helps virus spread through the circulation by further removing sialic acids from the cell surface. These cleavages prevent self-aggregation and ensure the efficient spread of the progeny virus from cell to cell. Otherwise, infection would be limited to one round of replication. Described as a receptor-destroying enzyme because it cleaves a terminal sialic acid from the cellular receptors. May facilitate viral invasion of the upper airways by cleaving the sialic acid moieties on the mucin of the airway epithelial cells. Likely to plays a role in the budding process through its association with lipid rafts during intracellular transport. May additionally display a raft-association independent effect on budding. Plays a role in the determination of host range restriction on replication and virulence. Sialidase activity in late endosome/lysosome traffic seems to enhance virus replication. The protein is Neuraminidase of Influenza A virus (strain A/Swine/Hong Kong/127/1982 H3N2).